The primary structure comprises 670 residues: MTEAKLTRGHSCVPCQHRKIRCNGQTPCAYCIRTGKECVRMRVSPSHSRNARLNHRRLTAAQTGSPSGDGQVIVSGDQRRYVEDNKLWKSLGDEMQGKDVSPDPERPPLRTRTDTPSTEVNLIFSHQRPTSISVKYPSAVHSFQLWQVFISNVHPLTKILHGPTVQKDILETFSEPTSTPGPTEALIFAIYLVAVVSLTDAECRSRFGEPRKDLLARYCNATEVALSKADFLRSTDLRVLQAFTLHLLSLRHICDHDILWLLTGLATRMGQRMGLHRESSLKDLPPFEAELRRRVWWQIVILDGRASQLTGASMNPNMQLYGDTQQPINLSDADLVPSASTIPQPSPITTDMLFCKVRIEIGVWMIEQKCLLGSESESSTTGKAKFFKAIDELERHIEEKYLANMDKELPLNLLTAYLARSAVCQLRLSVYHPIHRPERASDLSAEQIDMLLENSLEVIRYDILSHSTPALQCYLWHIANFFPFETFVLLISTLSGRPAGQVVDTAWEVIDQVYEHHPSFVSDTSDPLYWALGNITLKAWDQRVTSARTRGITVPRELPCIANLVHARATMARASSQQPSTTDVSGPATPQSLLLAQEAPVDYLGGLGTTNELASQTDLGMATGEELLGMMKGVDVDWDFWQQLLDGNGHDARARDDQETFYFSSFINKA.

A DNA-binding region (zn(2)-C6 fungal-type) is located at residues 12-38; it reads CVPCQHRKIRCNGQTPCAYCIRTGKEC. 2 disordered regions span residues 57–76 and 92–115; these read RLTA…IVSG and GDEM…RTDT. A compositionally biased stretch (basic and acidic residues) spans 92–113; it reads GDEMQGKDVSPDPERPPLRTRT.

It localises to the nucleus. Functionally, transcription factor that may participate in the regulation of the expression of the gene cluster that mediates the biosynthesis of aurofusarin, a red mycelium pigment which is acting as a mycotoxin. The polypeptide is Aurofusarin cluster transcription factor aurR2 (Gibberella zeae (strain ATCC MYA-4620 / CBS 123657 / FGSC 9075 / NRRL 31084 / PH-1) (Wheat head blight fungus)).